The chain runs to 396 residues: S-adenosylmethionine synthase (396 aa).

ATP is bound at residue H15. A Mg(2+)-binding site is contributed by D17. K(+) is bound at residue E43. L-methionine is bound by residues E56 and Q99. The flexible loop stretch occupies residues 99–109 (QSADIALGVDR). Residues 175–177 (DGK), 241–242 (RF), D250, 256–257 (RK), A273, and K277 contribute to the ATP site. L-methionine is bound at residue D250. K281 contacts L-methionine.

It belongs to the AdoMet synthase family. As to quaternary structure, homotetramer; dimer of dimers. The cofactor is Mg(2+). K(+) is required as a cofactor.

The protein localises to the cytoplasm. It carries out the reaction L-methionine + ATP + H2O = S-adenosyl-L-methionine + phosphate + diphosphate. It functions in the pathway amino-acid biosynthesis; S-adenosyl-L-methionine biosynthesis; S-adenosyl-L-methionine from L-methionine: step 1/1. Its function is as follows. Catalyzes the formation of S-adenosylmethionine (AdoMet) from methionine and ATP. The overall synthetic reaction is composed of two sequential steps, AdoMet formation and the subsequent tripolyphosphate hydrolysis which occurs prior to release of AdoMet from the enzyme. This chain is S-adenosylmethionine synthase, found in Desulfitobacterium hafniense (strain DSM 10664 / DCB-2).